The following is a 93-amino-acid chain: UPF0223 protein YfdD (93 aa).

The protein belongs to the UPF0223 family.

The polypeptide is UPF0223 protein YfdD (yfdD) (Lactococcus lactis subsp. lactis (strain IL1403) (Streptococcus lactis)).